The sequence spans 169 residues: Centrin-1 (169 aa).

The segment at 1–21 is essential for homooligomerization; it reads MHSRKGASSLPRGRGAGKKTE. Positions 1–25 are disordered; the sequence is MHSRKGASSLPRGRGAGKKTELTEE. 4 EF-hand domains span residues 25–60, 61–96, 98–133, and 134–169; these read EQRQ…LGFE, PKKE…KMAE, DPRE…LGEN, and LTDE…TNLF. Ca(2+)-binding residues include aspartate 38, aspartate 40, serine 42, cysteine 44, glutamate 49, aspartate 74, aspartate 76, threonine 78, serine 80, and glutamate 85.

This sequence belongs to the centrin family. Monomer. Homooligomerizes in a Ca(2+)-dependent manner. Interaction via the C-terminus with other proteins disrupts and/or prevents homooligomerization. Interacts with SFI1.

It is found in the cytoplasm. Its subcellular location is the cytoskeleton. The protein localises to the microtubule organizing center. It localises to the centrosome. Acts as a calcium sensor. Part of the centrosome outer core complex. This is Centrin-1 from Toxoplasma gondii (strain ATCC 50611 / Me49).